Consider the following 7031-residue polypeptide: Extracellular matrix-binding protein EbhB (7031 aa).

The first 39 residues, 1–39, serve as a signal peptide directing secretion; it reads MNYRDKIQKFSIRKYTVGTFSTVIATLVFLGFNTSQAHA. Over residues 41–59 the composition is skewed to polar residues; sequence ETNQPASVVKQKQQSNNEQ. Disordered regions lie at residues 41 to 86, 99 to 152, 250 to 277, 1342 to 1373, and 2418 to 2438; these read ETNQ…HENE, KVAQ…GNDN, PQRQ…PRSV, NNIT…ATTD, and TITP…TLTA. The span at 65-80 shows a compositional bias: low complexity; it reads SQVQNSQNSQNGQSLS. Positions 99–117 are enriched in polar residues; sequence KVAQSSTTNDEQPASQNVN. Basic and acidic residues predominate over residues 130 to 140; that stretch reads PDKEQSKHKQN. Polar residues-rich tracts occupy residues 141 to 151, 250 to 266, 1360 to 1373, and 2427 to 2438; these read ESQSANKNGND, PQRQ…QTRS, FRTT…ATTD, and HSVSSNPSTLTA. 38 consecutive FIVAR domains span residues 2524 to 2580, 2610 to 2666, 2687 to 2750, 2780 to 2836, 2864 to 2919, 2947 to 3002, 3030 to 3085, 3154 to 3212, 3280 to 3339, 3407 to 3465, 3533 to 3591, 3659 to 3717, 3785 to 3843, 3911 to 3969, 4037 to 4095, 4163 to 4221, 4289 to 4347, 4415 to 4473, 4541 to 4599, 4667 to 4725, 4793 to 4851, 4919 to 4977, 5045 to 5103, 5171 to 5229, 5297 to 5355, 5423 to 5481, 5549 to 5607, 5675 to 5733, 5801 to 5859, 5927 to 5985, 6053 to 6111, 6179 to 6236, 6304 to 6362, 6430 to 6488, 6556 to 6614, 6682 to 6740, 6818 to 6866, and 6934 to 6992; these read AKNH…VSDA, SKNN…ISDE, DTHA…VQSA, AKTK…IAAE, AKTQ…IRQN, AKNQ…INTN, AKTQ…INDK, AMTK…VNQK, AMTG…VNNA, AMGN…VNRA, AMGN…VTEA, AMNT…ITQK, AMAS…VEAA, AMGN…VEQA, AMGT…VTAA, AMKG…ITQA, QMGN…VEAA, AMAN…VENA, AMGT…INQI, AMGQ…VDRA, AMNS…VDNA, AMGA…INGM, AMTA…VNSA, AMKG…ITQV, AMHS…VEQA, AMGQ…VERA, AMTA…VTNA, AMKG…INQA, AMTN…VETA, AMSN…VEQA, AMNQ…INQK, AMGN…VQAA, AMGQ…VEAA, AMQR…VEQA, AMDQ…VTAA, AMNQ…VTQA, DKDQ…VEAA, and AMGN…VEAA.

The chain is Extracellular matrix-binding protein EbhB (ebhB) from Staphylococcus aureus (strain Newman).